The primary structure comprises 177 residues: Nucleoside triphosphate/diphosphate phosphatase (177 aa).

The active-site Proton donor is Arg23. Positions 87, 103, 105, 107, 120, and 123 each coordinate Mg(2+).

The protein belongs to the Ntdp family. The cofactor is Mg(2+).

The enzyme catalyses a ribonucleoside 5'-triphosphate + H2O = a ribonucleoside 5'-diphosphate + phosphate + H(+). The catalysed reaction is a ribonucleoside 5'-diphosphate + H2O = a ribonucleoside 5'-phosphate + phosphate + H(+). Functionally, has nucleoside phosphatase activity towards nucleoside triphosphates and nucleoside diphosphates. The protein is Nucleoside triphosphate/diphosphate phosphatase of Streptococcus sanguinis (strain SK36).